We begin with the raw amino-acid sequence, 369 residues long: 4-hydroxy-3-methylbut-2-en-1-yl diphosphate synthase (flavodoxin) (369 aa).

[4Fe-4S] cluster is bound by residues cysteine 270, cysteine 273, cysteine 305, and glutamate 312.

The protein belongs to the IspG family. The cofactor is [4Fe-4S] cluster.

The catalysed reaction is (2E)-4-hydroxy-3-methylbut-2-enyl diphosphate + oxidized [flavodoxin] + H2O + 2 H(+) = 2-C-methyl-D-erythritol 2,4-cyclic diphosphate + reduced [flavodoxin]. It functions in the pathway isoprenoid biosynthesis; isopentenyl diphosphate biosynthesis via DXP pathway; isopentenyl diphosphate from 1-deoxy-D-xylulose 5-phosphate: step 5/6. In terms of biological role, converts 2C-methyl-D-erythritol 2,4-cyclodiphosphate (ME-2,4cPP) into 1-hydroxy-2-methyl-2-(E)-butenyl 4-diphosphate. This is 4-hydroxy-3-methylbut-2-en-1-yl diphosphate synthase (flavodoxin) from Pseudomonas fluorescens (strain Pf0-1).